The chain runs to 458 residues: MNKFAIVLAAGKGTRMKSALPKVLHQVAGKSMLAHVLTSVSEVEIAKNVVIVGHEADRVIATLPKGTQFVKQVEQLGTGHAVRIAADLLANEDGATLVIAGDTPLITGQTLEALFDYHFAQNATATILTAIAPNPTGYGRIIRDENGSVEKIVEQKDANDFEKSITEINTGTYIFDNKSLFKALNEITTDNAQGEYYLTDVIEIFKKAGQTVAAHILDDFDESLGVNDRVALSQAELTMRKRINHQHMVNGVTLIDPATTYIDSEVTIGEETVIEANVTIKGNTFIGKNVLITNGSRIENSEIHSNCEVRNSTVEESRMSVGSNVGPYAHLRPGTVLSEEVHVGNFVEIKGSTLGKGTKAGHLTYIGNATVGEKVNFGAGTITANFDGKNKFNTEIDDFAFIGSNSTIIAPLHIGKNALTAAGSVVTEDVPDEAVEIGRGKQVNKLGRAKKMPHYRGQ.

Positions Met-1–Arg-229 are pyrophosphorylase. UDP-N-acetyl-alpha-D-glucosamine contacts are provided by residues Leu-8–Gly-11, Lys-22, Gln-72, and Gly-77–Thr-78. Asp-102 is a Mg(2+) binding site. UDP-N-acetyl-alpha-D-glucosamine contacts are provided by Gly-139, Glu-154, Asn-169, and Asn-227. Asn-227 lines the Mg(2+) pocket. The segment at Val-230 to Asn-250 is linker. Positions Gly-251–Gln-458 are N-acetyltransferase. UDP-N-acetyl-alpha-D-glucosamine is bound by residues Arg-332 and Lys-350. Residue His-362 is the Proton acceptor of the active site. UDP-N-acetyl-alpha-D-glucosamine is bound by residues Tyr-365 and Asn-376. Acetyl-CoA is bound by residues Ala-379, Ser-404, Ala-422, and Arg-439.

In the N-terminal section; belongs to the N-acetylglucosamine-1-phosphate uridyltransferase family. It in the C-terminal section; belongs to the transferase hexapeptide repeat family. As to quaternary structure, homotrimer. It depends on Mg(2+) as a cofactor.

It is found in the cytoplasm. It carries out the reaction alpha-D-glucosamine 1-phosphate + acetyl-CoA = N-acetyl-alpha-D-glucosamine 1-phosphate + CoA + H(+). It catalyses the reaction N-acetyl-alpha-D-glucosamine 1-phosphate + UTP + H(+) = UDP-N-acetyl-alpha-D-glucosamine + diphosphate. It functions in the pathway nucleotide-sugar biosynthesis; UDP-N-acetyl-alpha-D-glucosamine biosynthesis; N-acetyl-alpha-D-glucosamine 1-phosphate from alpha-D-glucosamine 6-phosphate (route II): step 2/2. The protein operates within nucleotide-sugar biosynthesis; UDP-N-acetyl-alpha-D-glucosamine biosynthesis; UDP-N-acetyl-alpha-D-glucosamine from N-acetyl-alpha-D-glucosamine 1-phosphate: step 1/1. Its pathway is bacterial outer membrane biogenesis; LPS lipid A biosynthesis. Functionally, catalyzes the last two sequential reactions in the de novo biosynthetic pathway for UDP-N-acetylglucosamine (UDP-GlcNAc). The C-terminal domain catalyzes the transfer of acetyl group from acetyl coenzyme A to glucosamine-1-phosphate (GlcN-1-P) to produce N-acetylglucosamine-1-phosphate (GlcNAc-1-P), which is converted into UDP-GlcNAc by the transfer of uridine 5-monophosphate (from uridine 5-triphosphate), a reaction catalyzed by the N-terminal domain. The chain is Bifunctional protein GlmU from Lactococcus lactis subsp. lactis (strain IL1403) (Streptococcus lactis).